A 720-amino-acid polypeptide reads, in one-letter code: Neurochondrin (720 aa).

This sequence belongs to the neurochondrin family.

It is found in the cytoplasm. The protein resides in the cytosol. The protein localises to the cell projection. It localises to the dendrite. Its subcellular location is the postsynapse. Its function is as follows. Probably involved in signal transduction, in the nervous system. Required for the spatial learning process. May also be involved in neurite outgrowth. The protein is Neurochondrin (ncdn) of Xenopus laevis (African clawed frog).